A 182-amino-acid chain; its full sequence is Ribosome maturation factor RimM (182 aa).

The PRC barrel domain maps to 103 to 182 (EDEFYWRELF…RIEVDWDPGF (80 aa)).

This sequence belongs to the RimM family. Binds ribosomal protein uS19.

It localises to the cytoplasm. An accessory protein needed during the final step in the assembly of 30S ribosomal subunit, possibly for assembly of the head region. Essential for efficient processing of 16S rRNA. May be needed both before and after RbfA during the maturation of 16S rRNA. It has affinity for free ribosomal 30S subunits but not for 70S ribosomes. This chain is Ribosome maturation factor RimM, found in Vibrio parahaemolyticus serotype O3:K6 (strain RIMD 2210633).